Consider the following 418-residue polypeptide: ATP phosphoribosyltransferase regulatory subunit (418 aa).

Belongs to the class-II aminoacyl-tRNA synthetase family. HisZ subfamily. In terms of assembly, heteromultimer composed of HisG and HisZ subunits.

It localises to the cytoplasm. The protein operates within amino-acid biosynthesis; L-histidine biosynthesis; L-histidine from 5-phospho-alpha-D-ribose 1-diphosphate: step 1/9. Its function is as follows. Required for the first step of histidine biosynthesis. May allow the feedback regulation of ATP phosphoribosyltransferase activity by histidine. This chain is ATP phosphoribosyltransferase regulatory subunit, found in Acetivibrio thermocellus (strain ATCC 27405 / DSM 1237 / JCM 9322 / NBRC 103400 / NCIMB 10682 / NRRL B-4536 / VPI 7372) (Clostridium thermocellum).